The following is a 290-amino-acid chain: Signal recognition particle receptor subunit beta (290 aa).

A helical membrane pass occupies residues 44–64; the sequence is VLLLALFTLIFIIIISKLFGS. GTP is bound by residues 92 to 100, 114 to 117, Gly-140, and Ala-268; these read GLSNAGKTA and THTS.

The protein belongs to the SRP receptor beta subunit family. As to quaternary structure, heterodimer of an alpha and a beta chain.

It is found in the endoplasmic reticulum membrane. Its function is as follows. Component of the signal recognition particle (SRP) complex receptor (SR). Ensures, in conjunction with the SRP complex, the correct targeting of the nascent secretory proteins to the endoplasmic reticulum membrane system. May mediate the membrane association of SR. This chain is Signal recognition particle receptor subunit beta (srprb), found in Dictyostelium discoideum (Social amoeba).